The chain runs to 189 residues: Gluconokinase (189 aa).

16–23 (GVSGAGKS) contributes to the ATP binding site.

It belongs to the gluconokinase GntK/GntV family. Monomer.

It catalyses the reaction D-gluconate + ATP = 6-phospho-D-gluconate + ADP + H(+). It functions in the pathway carbohydrate acid metabolism; D-gluconate degradation. Functionally, phosphorylates gluconate to 6-phosphogluconate. This chain is Gluconokinase, found in Arabidopsis thaliana (Mouse-ear cress).